A 128-amino-acid polypeptide reads, in one-letter code: Small ribosomal subunit protein uS11 (128 aa).

Belongs to the universal ribosomal protein uS11 family. Part of the 30S ribosomal subunit. Interacts with proteins S7 and S18. Binds to IF-3.

Its function is as follows. Located on the platform of the 30S subunit, it bridges several disparate RNA helices of the 16S rRNA. Forms part of the Shine-Dalgarno cleft in the 70S ribosome. In Onion yellows phytoplasma (strain OY-M), this protein is Small ribosomal subunit protein uS11.